The following is an 862-amino-acid chain: ATP-dependent helicase Lhr-Core (862 aa).

The ATP site is built by glutamine 37, lysine 60, threonine 61, aspartate 178, glutamate 179, valine 360, arginine 377, and histidine 380. The region spanning 41 to 233 is the Helicase ATP-binding domain; the sequence is IMDIHRGRNV…FLVGYSYGSE (193 aa). Residues 178–181 carry the DEAH box motif; it reads DEIH. The Helicase C-terminal domain occupies 269–424; that stretch reads ALYDILHDLI…SIKVPENCLD (156 aa). Residues 425–513 form a WH domain region; sequence VLAQHIYGMA…LYSTNIGTIP (89 aa). Residues 514 to 862 form a domain 4 region; sequence DRSAAVVKCG…HQAIIDEIKR (349 aa).

The protein belongs to the Lhr helicase family. Lhr-Core subfamily. Monomer.

The catalysed reaction is Couples ATP hydrolysis with the unwinding of duplex DNA by translocating in the 3'-5' direction.. The enzyme catalyses ATP + H2O = ADP + phosphate + H(+). Its function is as follows. DNA helicase that translocates in a 3'-5' direction on single-stranded (ss)DNA, probably involved in DNA repair. Most active on three- or four-stranded forked DNA; flayed structures and Holliday junction (HJ) substrates are unwound slightly less well. Also unwinds 3'-tailed duplexes; both RNA:DNA hybrids and double-stranded (ds)DNA with a 3'-single strand (ss)DNA loading strand are unwound. Substrates where the helicase loads on a 3'-ssRNA tail (DNA:RNA and RNA:RNA) were not tested. Blunt-ended dsDNA is not a substrate. Probably involved in replication-coupled DNA repair; remodeling of fork DNA after binding by Lhr generates ssDNA for ATP-dependent DNA translocation. The chain is ATP-dependent helicase Lhr-Core from Methanothermobacter thermautotrophicus (strain ATCC 29096 / DSM 1053 / JCM 10044 / NBRC 100330 / Delta H) (Methanobacterium thermoautotrophicum).